The chain runs to 222 residues: MTIVNVIAIDGPTASGKGTVAHKVADAVGFHLLDSGALYRLVALASDRAGIDLADVDALAKIASRLDVKFGPDRVWLQGEEVSLAIRAEAIGNRASAIAVHQPVRDALTQLQRSFRKLPGLVADGRDMGTVIFPDAPLKVFLTASVEARARRRYKQLIDKGISANIEDLLRDLEARDVRDRTRTAAPLRPAEDAKLLDTSDMTVDQAVAQVLEWFAAVRPDA.

Residue 11 to 19 participates in ATP binding; that stretch reads GPTASGKGT.

It belongs to the cytidylate kinase family. Type 1 subfamily.

The protein resides in the cytoplasm. The enzyme catalyses CMP + ATP = CDP + ADP. The catalysed reaction is dCMP + ATP = dCDP + ADP. The protein is Cytidylate kinase of Cupriavidus necator (strain ATCC 17699 / DSM 428 / KCTC 22496 / NCIMB 10442 / H16 / Stanier 337) (Ralstonia eutropha).